Here is a 69-residue protein sequence, read N- to C-terminus: Beta-defensin 114 (69 aa).

A signal peptide spans 1-26 (MRIFYYLHFLCYVTFILPATCTLVNA). 3 cysteine pairs are disulfide-bonded: C29-C57, C36-C50, and C40-C58.

This sequence belongs to the beta-defensin family. Expressed in epididymis, predominantly in the caput (at protein level).

It localises to the secreted. Functionally, has a salt-sensitive antimicrobial activity against Gram-negative bacteria, including E.coli, Gram-positive, including S.aureus, and fungi, including C.albicans. Binds to and neutralizes bacterial lipopolysaccharides (LPS), abolishing TNF production by macrophages challenged with LPS. Rescues the LPS-induced reduction of sperm motility in vitro and may protect from LPS-induced lethality. The protein is Beta-defensin 114 (DEFB114) of Homo sapiens (Human).